The primary structure comprises 83 residues: Cytochrome b559 subunit alpha (83 aa).

The helical transmembrane segment at 21-35 threads the bilayer; the sequence is VIHSITIPSLFIAGW. Heme is bound at residue His-23.

Belongs to the PsbE/PsbF family. In terms of assembly, heterodimer of an alpha subunit and a beta subunit. PSII is composed of 1 copy each of membrane proteins PsbA, PsbB, PsbC, PsbD, PsbE, PsbF, PsbH, PsbI, PsbJ, PsbK, PsbL, PsbM, PsbT, PsbX, PsbY, PsbZ, Psb30/Ycf12, at least 3 peripheral proteins of the oxygen-evolving complex and a large number of cofactors. It forms dimeric complexes. The cofactor is heme b.

Its subcellular location is the plastid. The protein localises to the chloroplast thylakoid membrane. In terms of biological role, this b-type cytochrome is tightly associated with the reaction center of photosystem II (PSII). PSII is a light-driven water:plastoquinone oxidoreductase that uses light energy to abstract electrons from H(2)O, generating O(2) and a proton gradient subsequently used for ATP formation. It consists of a core antenna complex that captures photons, and an electron transfer chain that converts photonic excitation into a charge separation. This Agrostis stolonifera (Creeping bentgrass) protein is Cytochrome b559 subunit alpha.